Here is a 607-residue protein sequence, read N- to C-terminus: Large ribosomal subunit assembly factor BipA (607 aa).

The 196-residue stretch at 3 to 198 folds into the tr-type G domain; it reads HSIRNIAIIA…SIIKYAPAPN (196 aa). GTP is bound by residues 15–20 and 128–131; these read DHGKTT and NKID.

The protein belongs to the TRAFAC class translation factor GTPase superfamily. Classic translation factor GTPase family. BipA subfamily. Monomer.

The protein resides in the cytoplasm. The enzyme catalyses GTP + H2O = GDP + phosphate + H(+). A 50S ribosomal subunit assembly protein with GTPase activity, required for 50S subunit assembly at low temperatures, may also play a role in translation. Binds GTP and analogs. Binds the 70S ribosome between the 30S and 50S subunits, in a similar position as ribosome-bound EF-G; it contacts a number of ribosomal proteins, both rRNAs and the A-site tRNA. In Buchnera aphidicola subsp. Acyrthosiphon pisum (strain APS) (Acyrthosiphon pisum symbiotic bacterium), this protein is Large ribosomal subunit assembly factor BipA.